A 426-amino-acid chain; its full sequence is Serine--tRNA ligase (426 aa).

231–233 (TAE) serves as a coordination point for L-serine. ATP contacts are provided by residues 262–264 (RRE) and valine 278. Glutamate 285 is an L-serine binding site. Residue 349–352 (EVSS) coordinates ATP. Serine 384 contributes to the L-serine binding site.

It belongs to the class-II aminoacyl-tRNA synthetase family. Type-1 seryl-tRNA synthetase subfamily. In terms of assembly, homodimer. The tRNA molecule binds across the dimer.

The protein localises to the cytoplasm. It catalyses the reaction tRNA(Ser) + L-serine + ATP = L-seryl-tRNA(Ser) + AMP + diphosphate + H(+). It carries out the reaction tRNA(Sec) + L-serine + ATP = L-seryl-tRNA(Sec) + AMP + diphosphate + H(+). It functions in the pathway aminoacyl-tRNA biosynthesis; selenocysteinyl-tRNA(Sec) biosynthesis; L-seryl-tRNA(Sec) from L-serine and tRNA(Sec): step 1/1. In terms of biological role, catalyzes the attachment of serine to tRNA(Ser). Is also able to aminoacylate tRNA(Sec) with serine, to form the misacylated tRNA L-seryl-tRNA(Sec), which will be further converted into selenocysteinyl-tRNA(Sec). The protein is Serine--tRNA ligase of Chlamydia caviae (strain ATCC VR-813 / DSM 19441 / 03DC25 / GPIC) (Chlamydophila caviae).